Consider the following 556-residue polypeptide: Formate--tetrahydrofolate ligase (556 aa).

Residue 65–72 (TPAGEGKT) coordinates ATP.

Belongs to the formate--tetrahydrofolate ligase family.

It carries out the reaction (6S)-5,6,7,8-tetrahydrofolate + formate + ATP = (6R)-10-formyltetrahydrofolate + ADP + phosphate. It participates in one-carbon metabolism; tetrahydrofolate interconversion. The protein is Formate--tetrahydrofolate ligase of Clostridium acidurici (Gottschalkia acidurici).